A 135-amino-acid chain; its full sequence is C-type natriuretic peptide (135 aa).

The first 25 residues, M1–A25, serve as a signal peptide directing secretion. A propeptide spanning residues D26–K113 is cleaved from the precursor. Residues E46–D67 form a disordered region. An intrachain disulfide couples C119 to C135.

This sequence belongs to the natriuretic peptide family.

It is found in the secreted. Its function is as follows. Hormone which may be vasoactive and natriuretic. Has a cGMP-stimulating activity. The polypeptide is C-type natriuretic peptide (Squalus acanthias (Spiny dogfish)).